The chain runs to 337 residues: Methionyl-tRNA formyltransferase (337 aa).

A (6S)-5,6,7,8-tetrahydrofolate-binding site is contributed by 110-113 (SLLP).

The protein belongs to the Fmt family.

The enzyme catalyses L-methionyl-tRNA(fMet) + (6R)-10-formyltetrahydrofolate = N-formyl-L-methionyl-tRNA(fMet) + (6S)-5,6,7,8-tetrahydrofolate + H(+). In terms of biological role, attaches a formyl group to the free amino group of methionyl-tRNA(fMet). The formyl group appears to play a dual role in the initiator identity of N-formylmethionyl-tRNA by promoting its recognition by IF2 and preventing the misappropriation of this tRNA by the elongation apparatus. The protein is Methionyl-tRNA formyltransferase of Frankia casuarinae (strain DSM 45818 / CECT 9043 / HFP020203 / CcI3).